Reading from the N-terminus, the 525-residue chain is ATP synthase subunit alpha (525 aa).

ATP is bound at residue 169-176 (GDRQTGKT).

The protein belongs to the ATPase alpha/beta chains family. In terms of assembly, F-type ATPases have 2 components, CF(1) - the catalytic core - and CF(0) - the membrane proton channel. CF(1) has five subunits: alpha(3), beta(3), gamma(1), delta(1), epsilon(1). CF(0) has three main subunits: a(1), b(2) and c(9-12). The alpha and beta chains form an alternating ring which encloses part of the gamma chain. CF(1) is attached to CF(0) by a central stalk formed by the gamma and epsilon chains, while a peripheral stalk is formed by the delta and b chains.

It is found in the cell membrane. It catalyses the reaction ATP + H2O + 4 H(+)(in) = ADP + phosphate + 5 H(+)(out). Its function is as follows. Produces ATP from ADP in the presence of a proton gradient across the membrane. The alpha chain is a regulatory subunit. The protein is ATP synthase subunit alpha of Mycoplasma mycoides subsp. mycoides SC (strain CCUG 32753 / NCTC 10114 / PG1).